We begin with the raw amino-acid sequence, 126 residues long: Protein LLP homolog (126 aa).

Residues 1–21 (MAKSLRSKWRRKMRAEKRKKV) are compositionally biased toward basic residues. 2 disordered regions span residues 1 to 22 (MAKS…KKVA) and 53 to 126 (VPPE…RLAW). Residues 73–94 (DGGKMDLDTKRNKKTMLDEHGR) are compositionally biased toward basic and acidic residues. Over residues 103 to 126 (QAKKLKAKRVGKNGKPKPKKRLAW) the composition is skewed to basic residues.

This sequence belongs to the learning-associated protein family.

It localises to the nucleus. Its subcellular location is the nucleolus. The protein resides in the chromosome. Functionally, regulates dendritic and spine growth and synaptic transmission. This is Protein LLP homolog (llph) from Danio rerio (Zebrafish).